The sequence spans 246 residues: Probable transcriptional regulatory protein Dole_0371 (246 aa).

The protein belongs to the TACO1 family.

It is found in the cytoplasm. This Desulfosudis oleivorans (strain DSM 6200 / JCM 39069 / Hxd3) (Desulfococcus oleovorans) protein is Probable transcriptional regulatory protein Dole_0371.